The following is a 485-amino-acid chain: Aspartyl/glutamyl-tRNA(Asn/Gln) amidotransferase subunit B (485 aa).

The protein belongs to the GatB/GatE family. GatB subfamily. In terms of assembly, heterotrimer of A, B and C subunits.

The enzyme catalyses L-glutamyl-tRNA(Gln) + L-glutamine + ATP + H2O = L-glutaminyl-tRNA(Gln) + L-glutamate + ADP + phosphate + H(+). It catalyses the reaction L-aspartyl-tRNA(Asn) + L-glutamine + ATP + H2O = L-asparaginyl-tRNA(Asn) + L-glutamate + ADP + phosphate + 2 H(+). Its function is as follows. Allows the formation of correctly charged Asn-tRNA(Asn) or Gln-tRNA(Gln) through the transamidation of misacylated Asp-tRNA(Asn) or Glu-tRNA(Gln) in organisms which lack either or both of asparaginyl-tRNA or glutaminyl-tRNA synthetases. The reaction takes place in the presence of glutamine and ATP through an activated phospho-Asp-tRNA(Asn) or phospho-Glu-tRNA(Gln). The protein is Aspartyl/glutamyl-tRNA(Asn/Gln) amidotransferase subunit B of Cupriavidus pinatubonensis (strain JMP 134 / LMG 1197) (Cupriavidus necator (strain JMP 134)).